We begin with the raw amino-acid sequence, 301 residues long: Probable alpha-L-glutamate ligase (301 aa).

Residues 104 to 287 (LQLLSRRGIG…VAGIIIEHLE (184 aa)) enclose the ATP-grasp domain. Residues Lys-141, 178-179 (EY), Asp-187, and 211-213 (RSN) contribute to the ATP site. Mg(2+) contacts are provided by Asp-248, Glu-260, and Asn-262. Asp-248, Glu-260, and Asn-262 together coordinate Mn(2+).

Belongs to the RimK family. It depends on Mg(2+) as a cofactor. Mn(2+) serves as cofactor.

In Pseudomonas fluorescens (strain Pf0-1), this protein is Probable alpha-L-glutamate ligase.